A 964-amino-acid polypeptide reads, in one-letter code: MVDIIDKALRMGEGHQLKKLENVAKAVNALEDEISALSDEDLKAQTPKFKQEIENGKSLDEIMPEAFATVREVSKRTLGQRHFDVQLMGGAALHWGNIAEMKTGEGKTLVATLPTYLNALEGKGVHVVTVNDYLASYQSELMGRIYRFLGMNVGCIITEQKPPERRKQYNADITYGTNNEFGFDYLRDNMAWEKADLVQRGHHYAIVDEVDSILIDEARTPLIISGPAEGDVTRWYRQFAKLVLKLTRDEDYDVDEKKKVVGILDPGITKVEDFLGIDNLYEPANTALIGYLNNAIKAKELFLRDKDYVVTQGEVLIVDEHTGRILPGRRYNEGLHQAIEAKEGVEVKAENQTFATITLQNYFRMYDKLAGMTGTAETEAAEFMNTYKLGVLPIKTNKPMIRKDQDDLIYRTKKEKLAAIVKDVAKRHAKGQPVLLGTASVESSEVVSTLLDVAKIPHQVLNAKQHEKEAAVVAVAGRKGAVTVATNMAGRGTDIMLGGNVEFLADAKLKSEGYSPEDTPEEYEKRWPGTLNEIKAQVKDEHEEVKELGGLYVLGTERHESRRIDNQLRGRSGRQGDPGESRFYLSLEDDLMRLFNTQLVAQVMAKGMEEGQPIEAKSVTKGVRTAQKAVESRNYEIRKNVLKYDDVMNKQRTVIYSERQAVLKGEDIHKDILRFISDTVESYIKGANKGSEKPKDWDWEGLFKALNTVIPTKVDEDEVRKIVGGLKGAKAVEAVRDLIVEDARQQYGEMEETIGETGLRDLERRVVLAVLDRKWREHLYEMDYLKDGIGLRGMGQRDPLVEYQREGYQMYNSMIEAIKEETVQLLFHIDIKQVATTDEAVDEVEETAESADTIAVASGPDENGESVVEAAEGEVEEEDEDTDAKQAIAESAAASGAGESTLPVAGPAPISHAEGKVPVSKRPKSEELKTPWADGRTFPGTGKNAPCPCGSGRKYKMCHGQNEK.

Residues Q86, G104–T108, and D494 each bind ATP. Positions A848 to K964 are disordered. Acidic residues predominate over residues A871–T882. The span at A889 to S900 shows a compositional bias: low complexity. Zn(2+) contacts are provided by C947, C949, C958, and H959.

It belongs to the SecA family. As to quaternary structure, monomer and homodimer. Part of the essential Sec protein translocation apparatus which comprises SecA, SecYEG and auxiliary proteins SecDF. Other proteins may also be involved. It depends on Zn(2+) as a cofactor.

It is found in the cell membrane. The protein resides in the cytoplasm. It catalyses the reaction ATP + H2O + cellular proteinSide 1 = ADP + phosphate + cellular proteinSide 2.. Functionally, part of the Sec protein translocase complex. Interacts with the SecYEG preprotein conducting channel. Has a central role in coupling the hydrolysis of ATP to the transfer of proteins into and across the cell membrane, serving as an ATP-driven molecular motor driving the stepwise translocation of polypeptide chains across the membrane. The polypeptide is Protein translocase subunit SecA (Bifidobacterium longum (strain DJO10A)).